Here is a 314-residue protein sequence, read N- to C-terminus: Olfactory receptor 1E1 (314 aa).

Over 1–25 (MMGQNQTSISDFLLLGLPIQPEQQN) the chain is Extracellular. The N-linked (GlcNAc...) asparagine glycan is linked to Asn5. Residues 26-49 (LCYALFLAMYLTTLLGNLLIIVLI) form a helical membrane-spanning segment. Topologically, residues 50-57 (RLDSHLHT) are cytoplasmic. The helical transmembrane segment at 58–79 (PMYLFLSNLSFSDLCFSSVTIP) threads the bilayer. At 80–100 (KLLQNMQNQDPSIPYADCLTQ) the chain is on the extracellular side. An intrachain disulfide couples Cys97 to Cys189. The chain crosses the membrane as a helical span at residues 101-120 (MYFFLLFGDLESFLLVAMAY). Over 121–139 (DRYVAICFPLHYTAIMSPM) the chain is Cytoplasmic. Residues 140–158 (LCLSVVALSWVLTTFHAML) form a helical membrane-spanning segment. Over 159–195 (HTLLMARLCFCADNVIPHFFCDMSALLKLACSDTRVN) the chain is Extracellular. Residues 196–219 (EWVIFIMGGLILVIPFLLILGSYA) form a helical membrane-spanning segment. Residues 220 to 236 (RIVSSILKVPSSKGICK) are Cytoplasmic-facing. Residues 237 to 259 (ALSTCGSHLSVVSLFYGTVIGLY) traverse the membrane as a helical segment. Topologically, residues 260–272 (LCPSANSSTLKDT) are extracellular. Residues 273-292 (VMAMIYTVVTPMLNPFIYSL) form a helical membrane-spanning segment. The Cytoplasmic segment spans residues 293-314 (RNRDMKGALSRVIHQKKTFFSL).

It belongs to the G-protein coupled receptor 1 family.

The protein resides in the cell membrane. Its function is as follows. Odorant receptor. In Pan troglodytes (Chimpanzee), this protein is Olfactory receptor 1E1 (OR1E1).